A 519-amino-acid chain; its full sequence is Acetylcholine receptor subunit gamma (519 aa).

The N-terminal stretch at Met1–Gly22 is a signal peptide. Residues Arg23–Lys240 are Extracellular-facing. N-linked (GlcNAc...) asparagine glycosylation is found at Asn52 and Asn163. A disulfide bridge connects residues Cys150 and Cys164. 3 helical membrane passes run Pro241–Leu265, Cys274–Ala292, and Tyr308–Val329. At Ser330–Arg476 the chain is on the cytoplasmic side. A helical transmembrane segment spans residues Val477–Ala497.

This sequence belongs to the ligand-gated ion channel (TC 1.A.9) family. Acetylcholine receptor (TC 1.A.9.1) subfamily. Gamma/CHRNG sub-subfamily. In terms of assembly, pentamer of two alpha chains, and one each of the beta, delta, and gamma (in immature muscle) or epsilon (in mature muscle) chains.

The protein resides in the postsynaptic cell membrane. The protein localises to the cell membrane. The catalysed reaction is K(+)(in) = K(+)(out). The enzyme catalyses Na(+)(in) = Na(+)(out). In terms of biological role, after binding acetylcholine, the AChR responds by an extensive change in conformation that affects all subunits and leads to opening of an ion-conducting channel across the plasma membrane. The protein is Acetylcholine receptor subunit gamma (CHRNG) of Bos taurus (Bovine).